The chain runs to 60 residues: Large ribosomal subunit protein bL32 (60 aa).

The tract at residues 1–60 is disordered; the sequence is MAVQQNKKTPSKRGMHRSHDFLVAPQLSVEQTTGETHMRHHISPNGFYRGRKVLKTKNDE. Over residues 49-60 the composition is skewed to basic residues; sequence RGRKVLKTKNDE.

Belongs to the bacterial ribosomal protein bL32 family.

This Herminiimonas arsenicoxydans protein is Large ribosomal subunit protein bL32.